Consider the following 92-residue polypeptide: Small ribosomal subunit protein uS19 (92 aa).

It belongs to the universal ribosomal protein uS19 family.

Protein S19 forms a complex with S13 that binds strongly to the 16S ribosomal RNA. The chain is Small ribosomal subunit protein uS19 from Leuconostoc mesenteroides subsp. mesenteroides (strain ATCC 8293 / DSM 20343 / BCRC 11652 / CCM 1803 / JCM 6124 / NCDO 523 / NBRC 100496 / NCIMB 8023 / NCTC 12954 / NRRL B-1118 / 37Y).